Reading from the N-terminus, the 258-residue chain is Granzyme A (258 aa).

An N-terminal signal peptide occupies residues 1–26; that stretch reads MNIPFPFSFPPAICLLLIPGVFPVSC. Positions 27–28 are cleaved as a propeptide — activation peptide; sequence EG. A Peptidase S1 domain is found at 29–255; sequence IIGGNEVAPH…HLNWIKKTIA (227 aa). C52 and C68 are joined by a disulfide. Active-site charge relay system residues include H67 and D112. Intrachain disulfides connect C146/C217, C178/C196, and C207/C230. N169 carries N-linked (GlcNAc...) asparagine glycosylation. S211 (charge relay system) is an active-site residue.

The protein belongs to the peptidase S1 family. Granzyme subfamily. In terms of assembly, homodimer; disulfide-linked. Interacts with APEX1.

Its subcellular location is the secreted. The protein resides in the cytoplasmic granule. It catalyses the reaction Hydrolysis of proteins, including fibronectin, type IV collagen and nucleolin. Preferential cleavage: -Arg-|-Xaa-, -Lys-|-Xaa- &gt;&gt; -Phe-|-Xaa- in small molecule substrates.. Its function is as follows. Abundant protease in the cytosolic granules of cytotoxic T-cells and NK-cells which activates caspase-independent pyroptosis when delivered into the target cell through the immunological synapse. It cleaves after Lys or Arg. Cleaves APEX1 after 'Lys-31' and destroys its oxidative repair activity. Cleaves the nucleosome assembly protein SET after 'Lys-189', which disrupts its nucleosome assembly activity and allows the SET complex to translocate into the nucleus to nick and degrade the DNA. The polypeptide is Granzyme A (GZMA) (Bos taurus (Bovine)).